The chain runs to 115 residues: Large ribosomal subunit protein P2 (115 aa).

Met-1 bears the N-acetylmethionine mark. 2 positions are modified to phosphoserine: Ser-17 and Ser-19. The residue at position 21 (Lys-21) is an N6-acetyllysine; alternate. Residue Lys-21 is modified to N6-succinyllysine; alternate. Low complexity predominate over residues 76–90; the sequence is APGSAAPAAGSAPAA. The disordered stretch occupies residues 76-115; that stretch reads APGSAAPAAGSAPAAAEEKKDEKKEESEESDDDMGFGLFD. A phosphoserine mark is found at Ser-79 and Ser-86. The span at 91-101 shows a compositional bias: basic and acidic residues; that stretch reads AEEKKDEKKEE. Ser-102 and Ser-105 each carry phosphoserine.

It belongs to the eukaryotic ribosomal protein P1/P2 family. In terms of assembly, heterodimer with RPLP1 at the lateral ribosomal stalk of the large ribosomal subunit.

Plays an important role in the elongation step of protein synthesis. The chain is Large ribosomal subunit protein P2 (Rplp2) from Mus musculus (Mouse).